A 4691-amino-acid chain; its full sequence is Plectin (4691 aa).

The interval 1-1478 (MVAGMLMPLD…SELTTLTSQY (1478 aa)) is globular 1. Arg21 is modified (phosphoserine). Val26 bears the Phosphotyrosine mark. Disordered regions lie at residues 113-161 (RSPH…TPVV) and 167-186 (GTLA…RDRV). The span at 137 to 154 (DPAREERQVYRRKEREEG) shows a compositional bias: basic and acidic residues. The interval 181-411 (DERDRVQKKT…YVSSLYDAMP (231 aa)) is actin-binding. 2 Calponin-homology (CH) domains span residues 185–293 (RVQK…LHFQ) and 306–411 (MTAK…DAMP). A Spectrin 1 repeat occupies 653 to 727 (LQSTQRRPEL…ERARNDESQL (75 aa)). A Phosphoserine modification is found at Ser728. Spectrin repeat units follow at residues 748 to 832 (KLLN…REDH) and 845 to 938 (LQTQ…AIVQ). Thr823 carries the post-translational modification Phosphothreonine. The 58-residue stretch at 949 to 1006 (RGHVPLIAVCDYKQVEVTVHKGDQCQLVGPAQPSHWKVLSGSSSEAAVPSVCFLVPPP) folds into the SH3 domain. Positions 963-4572 (VEVTVHKGDQ…ARTAQKLRDV (3610 aa)) are required for interaction with intermediate filament proteins. Ser1055 carries the phosphoserine modification. Residues 1323 to 1423 (RERVTQLLER…QKFAKQYINA (101 aa)) form a Spectrin 4 repeat. Ser1443 is modified (phosphoserine). 2 coiled-coil regions span residues 1477–1697 (QYIK…ERRL) and 1729–2764 (SFAE…TTQA). The central fibrous rod domain stretch occupies residues 1479–2762 (IKFISETLRR…ALAHSEIATT (1284 aa)). The tract at residues 1626 to 1653 (RAEEAEAQKRQAQEEAERLRRQVQDESQ) is disordered. Ser1729 is subject to Phosphoserine. The residue at position 1733 (Lys1733) is an N6-acetyllysine. 3 disordered regions span residues 1801 to 1835 (SLAQ…RELA), 2100 to 2141 (AEDT…SLAA), and 2223 to 2317 (RLRS…KHKK). 4 stretches are compositionally biased toward basic and acidic residues: residues 1806–1835 (DAEK…RELA), 2100–2116 (AEDT…EAAR), 2124–2136 (EEQR…ERVQ), and 2223–2266 (RLRS…KQSA). A compositionally biased stretch (low complexity) spans 2267 to 2280 (EEQAQAQAQAQAAA). A compositionally biased stretch (basic and acidic residues) spans 2281-2296 (EKLRKEAEQEAARRAQ). Ser2639 bears the Phosphoserine mark. Position 2644 is an N6-acetyllysine (Lys2644). A disordered region spans residues 2675–2728 (LREEQQRQQQQMEQEKQELMASMEEARRRQREAEEGVRRKQEELQHLEQQRQQQ). The span at 2687–2728 (EQEKQELMASMEEARRRQREAEEGVRRKQEELQHLEQQRQQQ) shows a compositional bias: basic and acidic residues. The tract at residues 2763 to 4691 (QAASTKALPN…SLGGPESAVA (1929 aa)) is globular 2. Ser2781 carries the post-translational modification Phosphoserine. Residue Tyr2788 is modified to Phosphotyrosine. Plectin repeat units follow at residues 2795-2832 (QKVP…REDV), 2833-2870 (YRYL…PGTA), 2871-2908 (LILL…PELH), 2909-2946 (HKLL…RDHG), 2947-2984 (VRLL…EEMN), and 2988-3022 (SDPS…PETG). A Phosphoserine modification is found at Ser2809. Residue Thr2893 is modified to Phosphothreonine. Tyr3040 carries the phosphotyrosine modification. Lys3060 and Lys3098 each carry N6-acetyllysine. Plectin repeat units follow at residues 3123–3160 (ALVP…ADSV), 3161–3198 (RQAL…PEVA), 3199–3236 (VALL…PELH), 3237–3274 (EKLL…REQG), 3275–3312 (LRLL…KETN), and 3315–3350 (LTSP…QLTG). Over residues 3312–3326 (NRALTSPRDDARVYH) the composition is skewed to basic and acidic residues. The segment at 3312-3338 (NRALTSPRDDARVYHDPSTQEPVTYSQ) is disordered. The segment covering 3328–3338 (PSTQEPVTYSQ) has biased composition (polar residues). Tyr3369 carries the post-translational modification Phosphotyrosine. An N6-acetyllysine modification is found at Lys3427. Plectin repeat units follow at residues 3492–3529 (RTLL…PSTA), 3530–3567 (TLLL…PELH), 3568–3605 (EKLL…RDHA), 3606–3643 (IRLL…EEMN), and 3647–3681 (ADPS…PETG). Thr3792 is modified (phosphothreonine). Tyr3797 carries the phosphotyrosine modification. Plectin repeat units lie at residues 3827–3864 (WRYL…AEVA), 3865–3902 (RLLL…PELH), 3903–3940 (DRLL…AEEA), 3941–3978 (LRLL…KDTH), and 3982–4015 (SEPS…DPSG). Positions 3954-4291 (VDPRLGFHLP…KRRVVIVDPE (338 aa)) are required for interaction with type2 keratins, DES and VIM. Residue Thr4037 is modified to Phosphothreonine. Ser4061 carries the phosphoserine modification. Plectin repeat units lie at residues 4070 to 4107 (QKFL…PGTA), 4108 to 4145 (FELL…PEFK), 4146 to 4183 (DKLL…KDHG), 4184 to 4221 (IRLL…EEMN), 4225 to 4259 (TDPS…PQTG), and 4272 to 4312 (RKTS…HQTY). A binding to intermediate filaments region spans residues 4257-4307 (QTGLCLLPLKEKKRERKTSSKSSVRKRRVVIVDPETGKEMSVYEAYRKGLI). The segment at 4387 to 4420 (FRSRSSSVGSSSSYPISSAGPRTQLASWSDPTEE) is disordered. Phosphoserine is present on residues Ser4389, Ser4391, Ser4392, Ser4393, Ser4396, Ser4397, Ser4398, and Ser4399. Residues 4389–4404 (SRSSSVGSSSSYPISS) show a composition bias toward low complexity. Phosphotyrosine is present on Tyr4400. Phosphoserine occurs at positions 4403 and 4413. A compositionally biased stretch (polar residues) spans 4406 to 4416 (GPRTQLASWSD). 5 Plectin repeats span residues 4415–4452 (SDPT…NITG), 4453–4490 (QRLL…KIMV), 4491–4528 (DRIN…YEAG), 4529–4566 (QRFL…ARTA), and 4567–4604 (QKLR…EGTG). Thr4418 is subject to Phosphothreonine. The interval 4503 to 4572 (FEDPRTKTKM…ARTAQKLRDV (70 aa)) is required for efficient interaction with KRT5 and KRT14 heterodimers. Thr4546 carries the phosphothreonine; by CDK1 modification. A phosphoserine mark is found at Ser4614 and Ser4620. Low complexity predominate over residues 4618-4678 (YYSPYSVSGS…SGYGRRYASG (61 aa)). Residues 4618 to 4691 (YYSPYSVSGS…SLGGPESAVA (74 aa)) are disordered. Tyr4622 bears the Phosphotyrosine mark. A phosphoserine mark is found at Ser4623, Ser4625, and Ser4629. Phosphothreonine is present on Thr4630. The interval 4632–4647 (GSRTGSRTGSRAGSRR) is 4 X 4 AA tandem repeats of G-S-R-X. Phosphoserine is present on Ser4633. Arg4634 and Arg4647 each carry omega-N-methylarginine. 2 positions are modified to phosphoserine: Ser4649 and Ser4682.

Belongs to the plakin or cytolinker family. Homodimer or homotetramer. Interacts (via actin-binding domain) with SYNE3. Interacts (via calponin-homology (CH) 1 domain) with VIM (via rod region). Interacts (via N-terminus) with DST isoform 2 (via N-terminus). Interacts with FER. Interacts with TOR1A. Interacts with ANK3. Identified in complexes that contain VIM, EZR, AHNAK, BFSP1, BFSP2, ANK2, PLEC, PRX and spectrin. In terms of assembly, interacts with KRT14, heterodimers consisting of KRT8 and KRT18, heterodimers consisting of KRT5 and KRT14, heterodimers consisting of KRT14 and KRT15, and heterodimers consisting of KRT1 and KRT10. Interacts with DES and VIM. In terms of processing, phosphorylated by CDK1; regulates dissociation from intermediate filaments during mitosis. Isoform PLEC-1A is phosphorylated on Ser-21. Isoform PLEC-1A is phosphorylated on Tyr-26. Detected in eye lens fiber cells (at protein level). Expressed at high levels in lung, brain, small intestine, muscle, heart and skin with lower levels found in kidney, liver, uterus, spleen and salivary gland.

It is found in the cytoplasm. The protein localises to the cytoskeleton. The protein resides in the cell junction. Its subcellular location is the hemidesmosome. It localises to the cell projection. It is found in the podosome. Interlinks intermediate filaments with microtubules and microfilaments and anchors intermediate filaments to desmosomes or hemidesmosomes. May be involved not only in the cross-linking and stabilization of cytoskeletal intermediate filaments network, but also in the regulation of their dynamics. This Mus musculus (Mouse) protein is Plectin (Plec).